The primary structure comprises 327 residues: Methionyl-tRNA formyltransferase (327 aa).

117 to 120 provides a ligand contact to (6S)-5,6,7,8-tetrahydrofolate; sequence SLLP.

Belongs to the Fmt family.

The enzyme catalyses L-methionyl-tRNA(fMet) + (6R)-10-formyltetrahydrofolate = N-formyl-L-methionyl-tRNA(fMet) + (6S)-5,6,7,8-tetrahydrofolate + H(+). Functionally, attaches a formyl group to the free amino group of methionyl-tRNA(fMet). The formyl group appears to play a dual role in the initiator identity of N-formylmethionyl-tRNA by promoting its recognition by IF2 and preventing the misappropriation of this tRNA by the elongation apparatus. The polypeptide is Methionyl-tRNA formyltransferase (Delftia acidovorans (strain DSM 14801 / SPH-1)).